Consider the following 564-residue polypeptide: Arginine--tRNA ligase (564 aa).

Residues 122–132 (PNIAKPFSIGH) carry the 'HIGH' region motif.

The protein belongs to the class-I aminoacyl-tRNA synthetase family. In terms of assembly, monomer.

It localises to the cytoplasm. The enzyme catalyses tRNA(Arg) + L-arginine + ATP = L-arginyl-tRNA(Arg) + AMP + diphosphate. This chain is Arginine--tRNA ligase, found in Lactococcus lactis subsp. cremoris (strain MG1363).